The chain runs to 478 residues: Chromosomal replication initiator protein DnaA (478 aa).

Positions 1 to 95 (MNKTLNPQEV…DVLEKEITEE (95 aa)) are domain I, interacts with DnaA modulators. Residues 96–141 (INDLVQSMEEEDFALIDHTKPVIPNFFDQNTRVNFGGGPNNHHPTT) are domain II. Positions 142–358 (GVNPRFTFDN…GALLRIFALA (217 aa)) are domain III, AAA+ region. 4 residues coordinate ATP: Gly-186, Gly-188, Lys-189, and Thr-190. Residues 359–478 (SFNKEEINMT…YKLTQFILRR (120 aa)) form a domain IV, binds dsDNA region.

It belongs to the DnaA family. Oligomerizes as a right-handed, spiral filament on DNA at oriC.

The protein localises to the cytoplasm. Functionally, plays an essential role in the initiation and regulation of chromosomal replication. ATP-DnaA binds to the origin of replication (oriC) to initiate formation of the DNA replication initiation complex once per cell cycle. Binds the DnaA box (a 9 base pair repeat at the origin) and separates the double-stranded (ds)DNA. Forms a right-handed helical filament on oriC DNA; dsDNA binds to the exterior of the filament while single-stranded (ss)DNA is stabiized in the filament's interior. The ATP-DnaA-oriC complex binds and stabilizes one strand of the AT-rich DNA unwinding element (DUE), permitting loading of DNA polymerase. After initiation quickly degrades to an ADP-DnaA complex that is not apt for DNA replication. Binds acidic phospholipids. This Tropheryma whipplei (strain TW08/27) (Whipple's bacillus) protein is Chromosomal replication initiator protein DnaA.